Consider the following 364-residue polypeptide: Trans-enoyl reductase traG (364 aa).

Residue 51 to 54 participates in NADP(+) binding; the sequence is VDAK. 136-143 lines the substrate pocket; that stretch reads LGLFTAGL. Residues 176-179, 199-202, Tyr217, and 264-265 each bind NADP(+); these read STAT, SKAN, and LE. 286 to 290 is a binding site for substrate; it reads ALTVF. 355-356 contacts NADP(+); the sequence is MS.

It belongs to the zinc-containing alcohol dehydrogenase family. As to quaternary structure, monomer.

Its pathway is secondary metabolite biosynthesis. In terms of biological role, trans-enoyl reductase; part of the tra gene cluster that produces terrestric acid. The clavatol biosynthesis cluster cla and the terrestric acid cluster tra are both involved in the production of peniphenones and penilactones. The non-reducing PKS claF is responsible for the formation of clavatol from successive condensations of 3 malonyl-CoA units, presumably with a simple acetyl-CoA starter unit, and 2 methylation steps. The esterase claE probably collaborates with claF by catalyzing the hydrolysis of ACP-bound acyl intermediates to free the ACP from stalled intermediates. The clavatol oxidase claD then converts clavatol to hydroxyclavatol. Spontaneous dehydration of hydroxyclavatol leads to the accumulation of the highly active ortho-quinone methide. On the other hand, the PKS-NRPS hybrid traA is involved in the formation of crustosic acid, with the help of traB and traD. The polyketide synthase module (PKS) of traA is responsible for the synthesis of the polyketide backbone via the condensation of an acetyl-CoA starter unit with 3 malonyl-CoA units. The downstream nonribosomal peptide synthetase (NRPS) module then amidates the carboxyl end of the polyketide with L-malic acid. Because traA lacks a designated enoylreductase (ER) domain, the required activity is provided the enoyl reductase traG. Crustosic acid undergoes decarboxylation and isomerization to the terrestric acid, catalyzed by the 2-oxoglutarate-dependent dioxygenase traH. Both acids are further converted to the 2 gamma-butyrolactones (R)-5-methyltetronic acid and (S)-5-carboxylmethyltetronic acid, with involvement of the cytochrome P450 monooxygenase claJ. Spontaneous addition of the methide to these gamma-butyrolactones leads to peniphenone D and penilactone D, which undergo again stereospecific attacking by methide to give penilactones A and B. This is Trans-enoyl reductase traG from Penicillium crustosum (Blue mold fungus).